We begin with the raw amino-acid sequence, 319 residues long: Probable casein kinase II subunit alpha homolog (319 aa).

Positions 37-316 constitute a Protein kinase domain; sequence YQIYQRMGRG…ADECLRHPLF (280 aa). Residues 43–51 and Lys-64 contribute to the ATP site; that span reads MGRGKYSEV. Residue Asp-151 is the Proton acceptor of the active site.

The protein belongs to the protein kinase superfamily. Ser/Thr protein kinase family. CK2 subfamily. Tetramer composed of two alpha chains, one beta chain and one beta' chain.

It catalyses the reaction L-seryl-[protein] + ATP = O-phospho-L-seryl-[protein] + ADP + H(+). The enzyme catalyses L-threonyl-[protein] + ATP = O-phospho-L-threonyl-[protein] + ADP + H(+). In terms of biological role, catalytic subunit of a constitutively active serine/threonine-protein kinase complex that phosphorylates a large number of substrates containing acidic residues C-terminal to the phosphorylated serine or threonine. This chain is Probable casein kinase II subunit alpha homolog (CKA1), found in Encephalitozoon cuniculi (strain GB-M1) (Microsporidian parasite).